The chain runs to 89 residues: Small ribosomal subunit protein bS20 (89 aa).

This sequence belongs to the bacterial ribosomal protein bS20 family.

Functionally, binds directly to 16S ribosomal RNA. The protein is Small ribosomal subunit protein bS20 of Hahella chejuensis (strain KCTC 2396).